Here is a 339-residue protein sequence, read N- to C-terminus: UDP-N-acetylglucosamine--N-acetylmuramyl-(pentapeptide) pyrophosphoryl-undecaprenol N-acetylglucosamine transferase (339 aa).

Residues 11 to 13, asparagine 127, arginine 170, serine 188, isoleucine 235, and glutamine 280 contribute to the UDP-N-acetyl-alpha-D-glucosamine site; that span reads TGG.

Belongs to the glycosyltransferase 28 family. MurG subfamily.

The protein localises to the cell inner membrane. It catalyses the reaction di-trans,octa-cis-undecaprenyl diphospho-N-acetyl-alpha-D-muramoyl-L-alanyl-D-glutamyl-meso-2,6-diaminopimeloyl-D-alanyl-D-alanine + UDP-N-acetyl-alpha-D-glucosamine = di-trans,octa-cis-undecaprenyl diphospho-[N-acetyl-alpha-D-glucosaminyl-(1-&gt;4)]-N-acetyl-alpha-D-muramoyl-L-alanyl-D-glutamyl-meso-2,6-diaminopimeloyl-D-alanyl-D-alanine + UDP + H(+). The protein operates within cell wall biogenesis; peptidoglycan biosynthesis. Cell wall formation. Catalyzes the transfer of a GlcNAc subunit on undecaprenyl-pyrophosphoryl-MurNAc-pentapeptide (lipid intermediate I) to form undecaprenyl-pyrophosphoryl-MurNAc-(pentapeptide)GlcNAc (lipid intermediate II). The polypeptide is UDP-N-acetylglucosamine--N-acetylmuramyl-(pentapeptide) pyrophosphoryl-undecaprenol N-acetylglucosamine transferase (Thermotoga petrophila (strain ATCC BAA-488 / DSM 13995 / JCM 10881 / RKU-1)).